A 454-amino-acid polypeptide reads, in one-letter code: NADP-specific glutamate dehydrogenase (454 aa).

Serine 2 is subject to N-acetylserine. Lysine 114 is a catalytic residue.

It belongs to the Glu/Leu/Phe/Val dehydrogenases family. In terms of assembly, homohexamer.

The enzyme catalyses L-glutamate + NADP(+) + H2O = 2-oxoglutarate + NH4(+) + NADPH + H(+). This is NADP-specific glutamate dehydrogenase (GDH) from Neurospora intermedia.